The chain runs to 575 residues: UvrABC system protein C (575 aa).

Positions 16–94 (SQPGVYRMYD…IKLYQPRYNV (79 aa)) constitute a GIY-YIG domain. The region spanning 204 to 239 (DQVLTQLISRMETASQNLEFEEAARIRDQIQAVRRV) is the UVR domain.

Belongs to the UvrC family. Interacts with UvrB in an incision complex.

The protein localises to the cytoplasm. Its function is as follows. The UvrABC repair system catalyzes the recognition and processing of DNA lesions. UvrC both incises the 5' and 3' sides of the lesion. The N-terminal half is responsible for the 3' incision and the C-terminal half is responsible for the 5' incision. This Shigella dysenteriae serotype 1 (strain Sd197) protein is UvrABC system protein C.